We begin with the raw amino-acid sequence, 85 residues long: Omega-conotoxin-like Am6.5 (85 aa).

A signal peptide spans 1 to 19 (MCILIVAVLFLTAWTFVMA). Positions 20-53 (DDPRDEPDTVVRGGKLFSRARDEMNPAASKLNER) are excised as a propeptide. 3 disulfides stabilise this stretch: Cys-55/Cys-73, Cys-62/Cys-77, and Cys-72/Cys-81. Gln-84 is modified (glutamine amide).

This sequence belongs to the conotoxin O1 family. In terms of processing, is not hydroxylated. As to expression, expressed by the venom duct.

Its subcellular location is the secreted. Functionally, omega-conotoxins act at presynaptic membranes, they bind and block voltage-gated calcium channels (Cav). This is Omega-conotoxin-like Am6.5 from Conus amadis (Amadis cone).